The following is a 324-amino-acid chain: Glyoxylate/hydroxypyruvate reductase B (324 aa).

Residues R237 and E266 contribute to the active site. Catalysis depends on H285, which acts as the Proton donor.

Belongs to the D-isomer specific 2-hydroxyacid dehydrogenase family. GhrB subfamily. As to quaternary structure, homodimer.

The protein localises to the cytoplasm. The catalysed reaction is glycolate + NADP(+) = glyoxylate + NADPH + H(+). The enzyme catalyses (R)-glycerate + NAD(+) = 3-hydroxypyruvate + NADH + H(+). It carries out the reaction (R)-glycerate + NADP(+) = 3-hydroxypyruvate + NADPH + H(+). Functionally, catalyzes the NADPH-dependent reduction of glyoxylate and hydroxypyruvate into glycolate and glycerate, respectively. The chain is Glyoxylate/hydroxypyruvate reductase B from Escherichia fergusonii (strain ATCC 35469 / DSM 13698 / CCUG 18766 / IAM 14443 / JCM 21226 / LMG 7866 / NBRC 102419 / NCTC 12128 / CDC 0568-73).